Here is a 421-residue protein sequence, read N- to C-terminus: Histidine--tRNA ligase (421 aa).

Belongs to the class-II aminoacyl-tRNA synthetase family. In terms of assembly, homodimer.

The protein resides in the cytoplasm. The enzyme catalyses tRNA(His) + L-histidine + ATP = L-histidyl-tRNA(His) + AMP + diphosphate + H(+). This chain is Histidine--tRNA ligase, found in Natranaerobius thermophilus (strain ATCC BAA-1301 / DSM 18059 / JW/NM-WN-LF).